A 184-amino-acid polypeptide reads, in one-letter code: GTP cyclohydrolase 1 (184 aa).

The Zn(2+) site is built by Cys75, His78, and Cys146.

This sequence belongs to the GTP cyclohydrolase I family. As to quaternary structure, homomer.

The enzyme catalyses GTP + H2O = 7,8-dihydroneopterin 3'-triphosphate + formate + H(+). It functions in the pathway cofactor biosynthesis; 7,8-dihydroneopterin triphosphate biosynthesis; 7,8-dihydroneopterin triphosphate from GTP: step 1/1. The polypeptide is GTP cyclohydrolase 1 (Streptococcus pneumoniae (strain Taiwan19F-14)).